The following is a 598-amino-acid chain: MLRTTLAPLVLALALALPAAAATPESWPTFGTQGTQFVRDGKPYQLLSGAIHFQRIPRAYWKDRLQKARALGLNTVETYVFWNLVEPQQGQFDFSGNNDVAAFVKEAAAQGLNVILRPGPYACAEWEAGGYPAWLFGKGNIRVRSRDPRFLAASQAYLDALAKQVQPLLNHNGGPIIAVQVENEYGSYADDHAYMADNRAMYVKAGFDKALLFTSDGADMLANGTLPDTLAVVNFAPGEAKSAFDKLIKFRPDQPRMVGEYWAGWFDHWGKPHAATDARQQAEEFEWILRQGHSANLYMFIGGTSFGFMNGANFQNNPSDHYAPQTTSYDYDAILDEAGHPTPKFALMRDAIARVTGVQPPALPAPITTTTLPATPLRESASLWDNLPTPIAIDTPQPMEQFGQDYGYILYRTTITGPRKGPLYLGDVRDVARVYVDQRPVGSVERRLQQVSLEVEIPAGQHTLDVLVENSGRINYGTRMADGRAGLVDPVLLDSQQLTGWQAFPLPMRTPDSIRGWTGKAVQGPAFHRGTLRIGTPTDTYLDMRAFGKGFAWANGVNLGRHWNIGPQTALYLRPSSARVTTRWWSSTWTMLHPSVRG.

An N-terminal signal peptide occupies residues 1–21; sequence MLRTTLAPLVLALALALPAAA. The Proton donor role is filled by E184. E260 (nucleophile) is an active-site residue.

It belongs to the glycosyl hydrolase 35 family.

The catalysed reaction is Hydrolysis of terminal non-reducing beta-D-galactose residues in beta-D-galactosides.. Functionally, preferentially hydrolyzes beta(1-&gt;3) galactosyl linkages over beta(1-&gt;4) linkages. In Xanthomonas manihotis, this protein is Beta-galactosidase (bga).